The chain runs to 185 residues: MLKAKILFVGPCESGKTVLANFLTESSDITEYSPTQGVRILEFENPHVTSNNKGTGCEFELWDCGGDAKFESCWPALMKDAHGVVIVFNADIPSHRKEMEMWYSCFVQQPSLQDTQCMLIAHHKPGSGDDKGSLSLSPPLNKLKLVHSNLEDDPEEIRMEFIKYLKSIINSMSESRDREEMSIMT.

Residues Gly-10–Thr-17, Asp-63–Asp-67, and His-123–Gly-126 contribute to the GTP site. At Ser-137 the chain carries Phosphoserine.

Belongs to the small GTPase superfamily. Rab family. In terms of assembly, component of the IFT complex B, at least composed of IFT20, IFT22, IFT25, IFT27, IFT46, IFT52, TRAF3IP1/IFT54, IFT57, IFT74, IFT80, IFT81, and IFT88. Interacts with IFT88. Interacts with CFAP61.

It is found in the cell projection. The protein localises to the cilium. Its function is as follows. Small GTPase-like component of the intraflagellar transport (IFT) complex B. This is Intraflagellar transport protein 22 homolog (IFT22) from Homo sapiens (Human).